A 466-amino-acid polypeptide reads, in one-letter code: Cysteine--tRNA ligase (466 aa).

Residue Cys-27 coordinates Zn(2+). The short motif at 29-39 (PTVYDLAHIGN) is the 'HIGH' region element. The Zn(2+) site is built by Cys-211, His-236, and Glu-240. The short motif at 270-274 (KMSKS) is the 'KMSKS' region element. An ATP-binding site is contributed by Lys-273.

The protein belongs to the class-I aminoacyl-tRNA synthetase family. Monomer. It depends on Zn(2+) as a cofactor.

It localises to the cytoplasm. The catalysed reaction is tRNA(Cys) + L-cysteine + ATP = L-cysteinyl-tRNA(Cys) + AMP + diphosphate. This is Cysteine--tRNA ligase from Anaplasma marginale (strain St. Maries).